Reading from the N-terminus, the 735-residue chain is E3 ubiquitin-protein ligase SH3RF2 (735 aa).

The RING-type zinc finger occupies 12–53 (CPVCFEKLDVTAKVLPCQHTFCKPCLQRIFKAHKELRCPECR). SH3 domains are found at residues 125–184 (DGVP…VIKQ) and 187–252 (QPPP…PNLS). Disordered stretches follow at residues 260–301 (SKGH…GSGQ) and 335–373 (TSPSMLTQHGDRADFPASSAGQVSTSHPAPASPGHSTAM). Positions 273 to 289 (LMSSPSRGKATNTSTLR) are enriched in polar residues. The interval 373-466 (MVSVPSSQQH…RHPTVCTTWA (94 aa)) is interaction with PAK4. In terms of domain architecture, SH3 3 spans 383–444 (LSTNMFVALH…PSDYVIPVFS (62 aa)). Disordered regions lie at residues 472–534 (VSSQ…PVQS), 612–637 (ETPIKSEPPPKPPASAPPSILVKPEN), and 649–735 (VRFQ…FPSK). Polar residues predominate over residues 523–534 (RKNGSLQRPVQS). The segment covering 617-627 (SEPPPKPPASA) has biased composition (pro residues). Residues 647 to 652 (KTVRFQ) form an interaction with PPP1CA region. At S655 the chain carries Phosphoserine. A compositionally biased stretch (polar residues) spans 715 to 735 (FSKTTPPVSTASVSQTLFPSK).

The protein belongs to the SH3RF family. Interacts with FASLG and PPP1CA. Interacts with PAK4 and TNFRSF1A. Interacts with DLK1, MAP3K10, MAPK8IP1/JIP1, MAPK8IP2/JIP2 and MAPK8IP3/JIP3. Interacts with RAC1 (both active GTP- or inactive GDP-bound forms). Post-translationally, autoubiquitinated.

The protein resides in the nucleus. The catalysed reaction is S-ubiquitinyl-[E2 ubiquitin-conjugating enzyme]-L-cysteine + [acceptor protein]-L-lysine = [E2 ubiquitin-conjugating enzyme]-L-cysteine + N(6)-ubiquitinyl-[acceptor protein]-L-lysine.. It participates in protein modification; protein ubiquitination. Its function is as follows. Has E3 ubiquitin-protein ligase activity. Acts as an anti-apoptotic regulator of the JNK pathway by ubiquitinating and promoting the degradation of SH3RF1, a scaffold protein that is required for pro-apoptotic JNK activation. Facilitates TNF-alpha-mediated recruitment of adapter proteins TRADD and RIPK1 to TNFRSF1A and regulates PAK4 protein stability via inhibition of its ubiquitin-mediated proteasomal degradation. Inhibits PPP1CA phosphatase activity. The protein is E3 ubiquitin-protein ligase SH3RF2 (Sh3rf2) of Rattus norvegicus (Rat).